A 652-amino-acid chain; its full sequence is Phosphoglucomutase 1, chloroplastic (652 aa).

Residues 1–84 (MAFSAAASAS…LAARRTLRVR (84 aa)) constitute a chloroplast transit peptide. Residues arginine 118 and serine 211 each contribute to the alpha-D-glucose 1,6-bisphosphate site. Serine 211 (phosphoserine intermediate) is an active-site residue. The Mg(2+) site is built by serine 211, aspartate 376, aspartate 378, and aspartate 380. A Phosphoserine modification is found at serine 211. Alpha-D-glucose 1,6-bisphosphate-binding residues include aspartate 380, arginine 381, threonine 443, glutamate 462, serine 464, and lysine 475.

It belongs to the phosphohexose mutase family. The cofactor is Mg(2+).

Its subcellular location is the plastid. It is found in the chloroplast. The enzyme catalyses alpha-D-glucose 1-phosphate = alpha-D-glucose 6-phosphate. The catalysed reaction is O-phospho-L-seryl-[protein] + alpha-D-glucose 1-phosphate = alpha-D-glucose 1,6-bisphosphate + L-seryl-[protein]. It carries out the reaction alpha-D-glucose 1,6-bisphosphate + L-seryl-[protein] = O-phospho-L-seryl-[protein] + alpha-D-glucose 6-phosphate. Inhibited by the Calvin cycle intermediates fructose-1,6-bisphosphate and ribulose-1,5-bisphosphate. Catalyzes the reversible isomerization of alpha-D-glucose 1-phosphate to alpha-D-glucose 6-phosphate. The mechanism proceeds via the intermediate compound alpha-D-glucose 1,6-bisphosphate. This enzyme participates in both the breakdown and synthesis of glucose. Required for sucrose production and accumulation necessary during plant development. Promotes gravitropic responses, negative in shoots but positive in roots, by facilitating starch granules (statoliths) formation. This chain is Phosphoglucomutase 1, chloroplastic, found in Marchantia polymorpha (Common liverwort).